The sequence spans 145 residues: Transmembrane protein 216 (145 aa).

Helical transmembrane passes span 22 to 42, 56 to 76, 89 to 109, and 122 to 142; these read ILFFLNGWYNATYFLLELFIF, LVLDVVMLLLYLGIEVIRLFF, LSISVALTFPSAMMASYYLLL, and GILLFFCGSELLLEVLTLAAF.

As to quaternary structure, part of the tectonic-like complex (also named B9 complex). Interacts with TMEM107.

The protein localises to the membrane. It is found in the cytoplasm. Its subcellular location is the cytoskeleton. It localises to the cilium basal body. In terms of biological role, part of the tectonic-like complex which is required for tissue-specific ciliogenesis and may regulate ciliary membrane composition. The chain is Transmembrane protein 216 (TMEM216) from Homo sapiens (Human).